Reading from the N-terminus, the 158-residue chain is GTP-dependent dephospho-CoA kinase (158 aa).

Residues D35, V36, D54, K56, E109, and D132 each contribute to the GTP site.

It belongs to the GTP-dependent DPCK family.

It catalyses the reaction 3'-dephospho-CoA + GTP = GDP + CoA + H(+). It functions in the pathway cofactor biosynthesis; coenzyme A biosynthesis. In terms of biological role, catalyzes the GTP-dependent phosphorylation of the 3'-hydroxyl group of dephosphocoenzyme A to form coenzyme A (CoA). This is GTP-dependent dephospho-CoA kinase from Methanococcus vannielii (strain ATCC 35089 / DSM 1224 / JCM 13029 / OCM 148 / SB).